Reading from the N-terminus, the 790-residue chain is Lon protease (790 aa).

The 197-residue stretch at L13–I209 folds into the Lon N-terminal domain. G362 to T369 contributes to the ATP binding site. The region spanning D598–T779 is the Lon proteolytic domain. Catalysis depends on residues S685 and K728.

This sequence belongs to the peptidase S16 family. Homohexamer. Organized in a ring with a central cavity.

The protein localises to the cytoplasm. It carries out the reaction Hydrolysis of proteins in presence of ATP.. Its function is as follows. ATP-dependent serine protease that mediates the selective degradation of mutant and abnormal proteins as well as certain short-lived regulatory proteins. Required for cellular homeostasis and for survival from DNA damage and developmental changes induced by stress. Degrades polypeptides processively to yield small peptide fragments that are 5 to 10 amino acids long. Binds to DNA in a double-stranded, site-specific manner. This is Lon protease from Orientia tsutsugamushi (strain Ikeda) (Rickettsia tsutsugamushi).